We begin with the raw amino-acid sequence, 433 residues long: Glutamate-1-semialdehyde 2,1-aminomutase (433 aa).

Lysine 273 bears the N6-(pyridoxal phosphate)lysine mark.

The protein belongs to the class-III pyridoxal-phosphate-dependent aminotransferase family. HemL subfamily. In terms of assembly, homodimer. Pyridoxal 5'-phosphate serves as cofactor.

It is found in the cytoplasm. The catalysed reaction is (S)-4-amino-5-oxopentanoate = 5-aminolevulinate. Its pathway is porphyrin-containing compound metabolism; protoporphyrin-IX biosynthesis; 5-aminolevulinate from L-glutamyl-tRNA(Glu): step 2/2. The chain is Glutamate-1-semialdehyde 2,1-aminomutase from Ralstonia nicotianae (strain ATCC BAA-1114 / GMI1000) (Ralstonia solanacearum).